The following is a 386-amino-acid chain: Alkanesulfonate monooxygenase (386 aa).

It belongs to the SsuD family.

The enzyme catalyses an alkanesulfonate + FMNH2 + O2 = an aldehyde + FMN + sulfite + H2O + 2 H(+). Functionally, catalyzes the desulfonation of aliphatic sulfonates. This is Alkanesulfonate monooxygenase from Delftia acidovorans (strain DSM 14801 / SPH-1).